We begin with the raw amino-acid sequence, 458 residues long: Lysine-rich nucleolar protein 1 (458 aa).

The span at 1-14 (MITKTHKVDLGLPE) shows a compositional bias: basic and acidic residues. Positions 1–21 (MITKTHKVDLGLPEKKKKKKV) are disordered. A Glycyl lysine isopeptide (Lys-Gly) (interchain with G-Cter in SUMO2) cross-link involves residue Lys-7. Phosphoserine occurs at positions 42 and 50. The segment at 46-305 (ATSPSKSVAH…ESGVAGDPWK (260 aa)) is disordered. Residues 64–73 (VKKKKKKKKG) show a composition bias toward basic residues. Lys-101 is covalently cross-linked (Glycyl lysine isopeptide (Lys-Gly) (interchain with G-Cter in SUMO2)). The residue at position 111 (Ser-111) is a Phosphoserine. Residue Lys-130 forms a Glycyl lysine isopeptide (Lys-Gly) (interchain with G-Cter in SUMO2) linkage. Phosphoserine is present on Ser-132. Over residues 145–155 (GKKLKKHKKEK) the composition is skewed to basic residues. Basic and acidic residues predominate over residues 173-192 (EAREARDVGDTCSVGKKDEE). The segment covering 198–218 (QKRKRKSPREHNGKVKKKKKI) has biased composition (basic residues). A Glycyl lysine isopeptide (Lys-Gly) (interchain with G-Cter in SUMO1); alternate cross-link involves residue Lys-249. A Glycyl lysine isopeptide (Lys-Gly) (interchain with G-Cter in SUMO2); alternate cross-link involves residue Lys-249. Phosphoserine is present on Ser-265. Basic residues predominate over residues 265-274 (SAKKKMKSKK). Residues Lys-275, Lys-287, and Lys-305 each participate in a glycyl lysine isopeptide (Lys-Gly) (interchain with G-Cter in SUMO2) cross-link. Residues 306–458 (EETDTDLEVV…NASKSVKLED (153 aa)) are interaction with ZNF106. Phosphothreonine is present on residues Thr-308 and Thr-310. Residues Lys-319, Lys-353, Lys-373, Lys-375, and Lys-407 each participate in a glycyl lysine isopeptide (Lys-Gly) (interchain with G-Cter in SUMO2) cross-link. The segment covering 336–353 (QEEIDRESGKTEASETRK) has biased composition (basic and acidic residues). The interval 336-355 (QEEIDRESGKTEASETRKWT) is disordered. Arg-430 is modified (omega-N-methylarginine). Lys-442 is covalently cross-linked (Glycyl lysine isopeptide (Lys-Gly) (interchain with G-Cter in SUMO2)).

Interacts with ZNF106.

The protein localises to the nucleus. The protein resides in the nucleolus. This Homo sapiens (Human) protein is Lysine-rich nucleolar protein 1 (KNOP1).